Here is a 537-residue protein sequence, read N- to C-terminus: MSGQQRGSVILVPEHLAGALTKLMSDFITGQDVTLSGGNIAVKIRDAINQTPGGGDVAILSSLFALWNALPTSGRQSSRDDLIPAAVQALTTAHNLCLGVIPGETSHKDTPESLLRAIVTGLQKLWVDSCGCPECLQCLKGLKAIKPGLYEIPRIIPHTKQCSPVNLLNMLVHKLVALRGHVQLAYDARVLTPDFHEIPDLDDSDAVFARTLLAALFHLNMFFILKDYITQDSMSLKQALSGHWMSATGNPLPAAPETLRDYLEAFRNSDNHFYLPTTGPLNTFKFPEELLGRVVVIDSSLCAASHVQDVITRGVGAGVPRPQFLALPPAPSRKPQQTCSQLTSRGNESSRRNLGQPGGTSPAVPPVCPIVSLTASGAKQNRGGMGSLHLAKPEETSPAVSPVCPIASPAASRSKQHCGVTGSSQAAPSSSSVAPVASLSGDLEEEEEGSRESPSLPSSKKGADEFEAWLEAQDANFEDVQREFSGLRVIGDEDEDGSEDGEFSDLDLSDSDHEGDEGGGAVGGGRSLHSLYSLSVI.

Disordered regions lie at residues 325 to 474 and 486 to 537; these read LALP…EAQD and GLRV…LSVI. A compositionally biased stretch (polar residues) spans 334–347; that stretch reads KPQQTCSQLTSRGN. The span at 423-441 shows a compositional bias: low complexity; the sequence is SSQAAPSSSSVAPVASLSG. A compositionally biased stretch (acidic residues) spans 492-517; that stretch reads DEDEDGSEDGEFSDLDLSDSDHEGDE.

It belongs to the lymphocryptovirus BRRF2 family.

It localises to the virion tegument. The protein is Tegument protein BRRF2 of Homo sapiens (Human).